The primary structure comprises 488 residues: Intron-encoded DNA endonuclease I-AniI (488 aa).

The tract at residues 1 to 169 is cobA exon 1 encoded; that stretch reads MRILKSHPLL…DIVEFIWGGL (169 aa). The tract at residues 170 to 488 is cobA intron encoded; the sequence is YTDEPQCGDV…SEKIKIPSNY (319 aa).

It in the C-terminal section; belongs to the LAGLIDADG endonuclease family. In terms of assembly, homodimer. Mg(2+) serves as cofactor. The mature protein may arise from proteolytic cleavage of an in-frame translation of cobA exon 1 plus intron, containing the I-AniI open reading frame. Cleavage may take place close to Met-213 resulting in an active endonuclease/maturase of about 30 kDa.

The protein localises to the mitochondrion. In terms of biological role, mitochondrial DNA endonuclease and mRNA maturase involved in intron homing and required for splicing of the cytochrome b (cobA) gene intron, containing its own coding sequence. The protein stimulates the intrinsic ribozyme activity of the intron through binding to and stabilizing specific secondary and tertiary structure elements in the RNA. As an endonuclease it introduces a specific double-strand break at the junction of the two exons the cobA gene and thus mediates the insertion of an intron, containing its own coding sequence (group I intron), into an intronless gene. Recognizes with limited specificity and cleaves the sequence 5'-GAGGAGGTTTCTCTGTA-3'. The proteins RNA and DNA recognition and binding surfaces are independent. The protein is Intron-encoded DNA endonuclease I-AniI (I-AniI) of Emericella nidulans (Aspergillus nidulans).